A 588-amino-acid chain; its full sequence is Autophagy-related protein 22-1 (588 aa).

A helical transmembrane segment spans residues 35–55 (YGWAAEVFTVCAMGSFLPITL). The N-linked (GlcNAc...) asparagine glycan is linked to Asn84. 3 consecutive transmembrane segments (helical) span residues 109–129 (TASF…ILII), 144–164 (LLVS…AVTP), and 168–188 (LLGG…FVLL). Asn255 carries an N-linked (GlcNAc...) asparagine glycan. Helical transmembrane passes span 270–290 (GIGI…LVIV), 301–321 (LVLF…AFWL), 365–385 (ILLF…VSGT), 399–419 (AALG…AFSW), 434–454 (IIAC…GFIP), 471–493 (FPLG…SFFG), 507–527 (LYAI…GFIT), and 536–556 (AFFF…LVDA).

Belongs to the ATG22 family.

It is found in the vacuole membrane. Vacuolar effluxer which mediate the efflux of amino acids resulting from autophagic degradation. The release of autophagic amino acids allows the maintenance of protein synthesis and viability during nitrogen starvation. The protein is Autophagy-related protein 22-1 (atg22-1) of Emericella nidulans (strain FGSC A4 / ATCC 38163 / CBS 112.46 / NRRL 194 / M139) (Aspergillus nidulans).